A 103-amino-acid polypeptide reads, in one-letter code: Protein S100-A16 (103 aa).

Residues 12–47 form the EF-hand 1; degenerate domain; the sequence is VVVLVENFYKYVSKHSLVKNKISKSSFRKMLQKELN. The EF-hand 2 domain occupies 54–89; the sequence is GNRKAADKLIQNLDANHDGRISFDEYWTLIGGITSP. Residues D67, N69, D71, R73, and E78 each contribute to the Ca(2+) site.

Belongs to the S-100 family. In terms of assembly, homodimer. Interacts with TP53.

It is found in the nucleus. It localises to the nucleolus. The protein localises to the cytoplasm. Functionally, calcium-binding protein. Binds one calcium ion per monomer. Can promote differentiation of adipocytes (in vitro). Overexpression in preadipocytes increases their proliferation, enhances adipogenesis and reduces insulin-stimulated glucose uptake. This chain is Protein S100-A16 (S100A16), found in Bos taurus (Bovine).